Consider the following 188-residue polypeptide: Elongation factor P-like protein (188 aa).

This sequence belongs to the elongation factor P family.

The polypeptide is Elongation factor P-like protein (Vibrio cholerae serotype O1 (strain ATCC 39541 / Classical Ogawa 395 / O395)).